The primary structure comprises 2024 residues: Pericentriolar material 1 protein (2024 aa).

Residues 1–92 (MATGGGPFED…FPHSRYMSQM (92 aa)) are disordered. N-acetylalanine is present on Ala2. A mediates interaction with DZIP1 region spans residues 2–1460 (ATGGGPFEDG…TWIASNSELT (1459 aa)). Residues 43–61 (RSSEKNKKKFGVESDKRVT) show a composition bias toward basic and acidic residues. A phosphoserine mark is found at Ser65, Ser68, Ser69, Ser93, Ser110, Ser116, and Ser119. Residues 111 to 163 (DLDQRSIGSDSQGRATAANNKRQLSENRKPFNFLPMQINTNKSKDASTNPPNR) form a disordered region. 2 stretches are compositionally biased toward polar residues: residues 116-132 (SIGSDSQGRATAANNKR) and 147-163 (QINTNKSKDASTNPPNR). At Asn159 the chain carries Phosphoserine; in variant Ser-159. Residues 218–301 (KASSMREDLV…QLRALQGRQA (84 aa)) adopt a coiled-coil conformation. Residues 354–392 (RDSQPPAVPDNRRQAESLSLTREVSQSRKPSASERLPDE) form a disordered region. Residues 369–383 (ESLSLTREVSQSRKP) are compositionally biased toward polar residues. The residue at position 370 (Ser370) is a Phosphoserine. Ser372 is subject to Phosphoserine; by PLK4. Ser384 is modified (phosphoserine). Position 399 is an N6-acetyllysine (Lys399). Positions 400–424 (MRVLQEKKQKMDKLLGELHTLRDQH) form a coiled coil. 2 disordered regions span residues 421 to 492 (RDQH…KLQK) and 523 to 548 (ENRKDEETEESEYDSEHENSEPVTNI). Polar residues-rich tracts occupy residues 425-445 (LNNSSSSPQRSVDQRSTSAPS) and 456-477 (GESNSLTSSVPYPTASLVSQNE). Residues 487 to 543 (SEKLQKLNEVRKRLNELRELVHYYEQTSDMMTDAVNENRKDEETEESEYDSEHENSE) are a coiled coil. The residue at position 588 (Ser588) is a Phosphoserine. 2 disordered regions span residues 614–652 (HVAQGEDDEEEEEEAEEEGVSGASLSSHRSSLVDEHPED) and 699–726 (FYPAEEDTKQNSNNTRGNANKTQKDTGV). The segment covering 618–632 (GEDDEEEEEEAEEEG) has biased composition (acidic residues). The segment covering 634 to 643 (SGASLSSHRS) has biased composition (low complexity). Position 643 is a phosphoserine (Ser643). Positions 651-682 (EDAEFEQKINRLMAAKQKLRQLQDLVAMVQDD) form a coiled coil. The span at 708–719 (QNSNNTRGNANK) shows a compositional bias: polar residues. Coiled-coil stretches lie at residues 726–769 (VNEK…LQTA) and 824–858 (SEMRRHEMLREELRQRRKQLEALMAEHQRRQGLAE). Thr859 carries the post-translational modification Phosphothreonine. Phosphoserine is present on residues Ser861, Ser866, Ser869, and Ser872. At Thr877 the chain carries Phosphothreonine. The segment at 915–947 (TDEEEEEEQDASSNDNFSVCPSNSVNHNSYNGK) is disordered. Over residues 925–946 (ASSNDNFSVCPSNSVNHNSYNG) the composition is skewed to polar residues. A phosphoserine mark is found at Ser960, Ser977, Ser988, and Ser991. A coiled-coil region spans residues 1063-1089 (TQLTWQQNNVQRLKQMLNELMRQQNQH). Disordered stretches follow at residues 1085–1109 (QQNQHPEKPGGKERGSSASHPPSPS) and 1152–1211 (FSQN…RTPW). Over residues 1089-1099 (HPEKPGGKERG) the composition is skewed to basic and acidic residues. Positions 1152–1173 (FSQNISTPSEQQQPLAQNSSGK) are enriched in polar residues. 2 positions are modified to phosphoserine: Ser1185 and Ser1188. Positions 1192–1201 (EKPRNKKLPE) are enriched in basic and acidic residues. Ser1229 and Ser1231 each carry phosphoserine. Over residues 1232–1246 (VEKSTSSNRKNQLDT) the composition is skewed to polar residues. The tract at residues 1232-1342 (VEKSTSSNRK…RHSAQTEEPV (111 aa)) is disordered. Phosphoserine occurs at positions 1257, 1260, 1262, and 1263. The tract at residues 1279–1799 (TRKASAQASL…TQALTNYGSG (521 aa)) is interaction with HAP1. The segment covering 1296-1313 (KSKSKKRNSTQLKSRVKN) has biased composition (basic residues). Phosphoserine occurs at positions 1318 and 1320. Position 1468 is a phosphothreonine (Thr1468). The stretch at 1515–1539 (IHLDQALARMREYERMKTEAESNSN) forms a coiled coil. Ser1573, Ser1697, Ser1730, Ser1765, Ser1768, Ser1776, and Ser1782 each carry phosphoserine. Disordered regions lie at residues 1725 to 1868 (LEDH…NNCP) and 1880 to 1944 (EQPL…PVLV). The segment covering 1768–1777 (SDQEEDEESE) has biased composition (acidic residues). The segment covering 1783–1797 (INLSKAETQALTNYG) has biased composition (polar residues). The span at 1799–1815 (GEDENEDEEMEEFEEGP) shows a compositional bias: acidic residues. The segment covering 1818 to 1827 (VQTSLQANTE) has biased composition (polar residues). Basic and acidic residues predominate over residues 1835–1860 (DEQVLQRDFKKTAESKNVPLEREATS). The segment covering 1905–1916 (PLRLPEMEPLVP) has biased composition (low complexity). Residues 1913–2024 (PLVPRVKEVK…EPETVGAQSI (112 aa)) are interaction with BBS4. Residues 1924–1933 (AQETPESSLA) show a composition bias toward polar residues. 2 positions are modified to phosphoserine: Ser1958 and Ser1977. Residues 2005–2024 (ELAGNSETLKEPETVGAQSI) are disordered.

This sequence belongs to the PCM1 family. Self-associates. Interacts with C2CD3. Interacts with BBS4, BBS8, CETN3, HAP1, NDE1, NDEL1, MAP1LC3B, GABARAPAL2, and GABARAP. Interacts with CEP131; the interaction increases in response to ultraviolet light (UV) radiation. Associates with microtubule; association to microtubule is reduced in response to cellular stress, such as ultraviolet light (UV) radiation or heat shock, in a process that requires p38 MAP kinase signaling. Interacts with CFAP263. Interacts with SSX2IP. Interacts with CCDC13. Interacts with CEP290. Interacts with PARD6A. Interacts with KIAA0753/OFIP, CEP20/FOR20 and OFD1; the interaction with CEP20/FOR20 and OFD1 may be mediated by KIAA0753/OFIP. Interacts with CCDC66. Interacts with CCDC61. Interacts with DZIP1; localizes DZIP1 and the associated BBSome to centriolar satellite. Interacts with CSTPP1, TTLL1, TPGS1 and LRRC49. Interacts with CFAP53. In terms of processing, ubiquitinated. Undergoes monoubiquitination catalyzed by the E3 ubiquitin-protein ligase MIB1 in proliferating cells, preventing cilia formation. Monoubiquitination by MIB1 is inhibited in response to cellular stress, such as ultraviolet light (UV) radiation or heat shock, resulting in cilia formation initiation. Variant Ser-159 is phosphorylated. Post-translationally, phosphorylated on multiple serine and threonine residues by DYRK3 during the G2-to-M transition, after the nuclear-envelope breakdown. Phosphorylation by DYRK3 promotes disassembly of pericentriolar material. Phosphorylation at Ser-372 mediated by PLK4 is required to maintain the integrity of centriolar satellites. In terms of tissue distribution, expressed in blood, bone marrow, breast, lymph node, ovary and thyroid.

The protein resides in the cytoplasm. The protein localises to the cytoskeleton. Its subcellular location is the microtubule organizing center. It is found in the centrosome. It localises to the cytoplasmic granule. The protein resides in the centriolar satellite. The protein localises to the cilium basal body. Required for centrosome assembly and function. Essential for the correct localization of several centrosomal proteins including CEP250, CETN3, PCNT and NEK2. Required to anchor microtubules to the centrosome. Also involved in cilium biogenesis by recruiting the BBSome, a ciliary protein complex involved in cilium biogenesis, to the centriolar satellites. Recruits the tubulin polyglutamylase complex (TPGC) to centriolar satellites. This is Pericentriolar material 1 protein from Homo sapiens (Human).